A 145-amino-acid polypeptide reads, in one-letter code: Peptide methionine sulfoxide reductase MsrB (145 aa).

The MsrB domain maps to 4-127 (KEELRQRIGD…NSAALKFIPY (124 aa)). Cys-116 serves as the catalytic Nucleophile.

It belongs to the MsrB Met sulfoxide reductase family.

The catalysed reaction is L-methionyl-[protein] + [thioredoxin]-disulfide + H2O = L-methionyl-(R)-S-oxide-[protein] + [thioredoxin]-dithiol. This Streptococcus equi subsp. zooepidemicus (strain H70) protein is Peptide methionine sulfoxide reductase MsrB.